Consider the following 350-residue polypeptide: Ion-translocating oxidoreductase complex subunit D (350 aa).

4 consecutive transmembrane segments (helical) span residues 37-57 (YFFG…ALTA), 68-88 (AVLS…IGVA), 89-109 (IPPI…IVLV), and 120-140 (IFNP…VQMT). T185 carries the FMN phosphoryl threonine modification. Helical transmembrane passes span 212–232 (GYGV…LIML), 239–259 (WHIS…GYLL), 265–285 (VGPL…FIAT), 291–311 (ATSV…VYVI), and 315–335 (GGYP…APFI).

It belongs to the NqrB/RnfD family. In terms of assembly, the complex is composed of six subunits: RnfA, RnfB, RnfC, RnfD, RnfE and RnfG. The cofactor is FMN.

Its subcellular location is the cell inner membrane. Functionally, part of a membrane-bound complex that couples electron transfer with translocation of ions across the membrane. The protein is Ion-translocating oxidoreductase complex subunit D of Shewanella pealeana (strain ATCC 700345 / ANG-SQ1).